A 599-amino-acid chain; its full sequence is NADH-ubiquinone oxidoreductase chain 5 (599 aa).

Transmembrane regions (helical) follow at residues 1-21, 41-61, 79-99, 114-134, 137-157, 166-186, 198-218, 237-257, 269-289, 297-317, 323-343, 362-382, 400-420, 453-473, 478-498, 509-529, and 578-598; these read MALM…PLVF, FITS…IIIL, LDLY…SIME, FLNY…ANNM, LFIG…WWYG, LQAI…MAWF, IFSL…AAMG, TPVS…FLLI, IMTT…ICAL, IIAF…GINQ, LHIC…GSII, MPLT…TPFM, INSW…AYST, LMLG…PVNM, MPFT…IVAM, MYPN…PTII, and GMLK…MLIM.

The protein belongs to the complex I subunit 5 family.

The protein resides in the mitochondrion inner membrane. It carries out the reaction a ubiquinone + NADH + 5 H(+)(in) = a ubiquinol + NAD(+) + 4 H(+)(out). Core subunit of the mitochondrial membrane respiratory chain NADH dehydrogenase (Complex I) that is believed to belong to the minimal assembly required for catalysis. Complex I functions in the transfer of electrons from NADH to the respiratory chain. The immediate electron acceptor for the enzyme is believed to be ubiquinone. This is NADH-ubiquinone oxidoreductase chain 5 (ND5) from Geomys personatus (Texas pocket gopher).